Consider the following 293-residue polypeptide: MAQHYKTIGLIGKPNHDGASATIQTLHKYLLANEYKVIVEVSVAQSLDIKKMKTGTLTDIGEQADLAIVIGGDGYMLGAARVLACFDIGVIGVNRGNLGFLTDLSPSEIIKPLEQILSGKSRSEQRFIIEAEVYRHGKLKSSNSAVNEAVLHAGKVASMIEFEVYIDGTFMFSQRSDGLIISTPTGSTAYSMSAGGPILTPNLNALSLVPMFPHTLTSRPIVVDGNSEIKLILANDNHENLQVSCDGHVILTVMPGDEVIIKKSECSIRLIHPLDHEYFNVLRNKLSWGNKLY.

Residue aspartate 73 is the Proton acceptor of the active site. NAD(+) contacts are provided by residues 73–74 (DG), 147–148 (NE), arginine 175, aspartate 177, and 188–193 (TAYSMS).

This sequence belongs to the NAD kinase family. A divalent metal cation serves as cofactor.

It localises to the cytoplasm. It catalyses the reaction NAD(+) + ATP = ADP + NADP(+) + H(+). Functionally, involved in the regulation of the intracellular balance of NAD and NADP, and is a key enzyme in the biosynthesis of NADP. Catalyzes specifically the phosphorylation on 2'-hydroxyl of the adenosine moiety of NAD to yield NADP. This Colwellia psychrerythraea (strain 34H / ATCC BAA-681) (Vibrio psychroerythus) protein is NAD kinase.